The sequence spans 250 residues: High affinity immunoglobulin epsilon receptor subunit alpha (250 aa).

The N-terminal stretch at 1-23 (MVTGRSAQLCLALLFMSLDVILT) is a signal peptide. Residues 24–204 (ATEKSVLTLD…AYKCKYYWLQ (181 aa)) are Extracellular-facing. The 77-residue stretch at 28–104 (SVLTLDPPWI…QGLFKSKPVY (77 aa)) folds into the Ig-like 1 domain. Cysteines 49 and 92 form a disulfide. 6 N-linked (GlcNAc...) asparagine glycosylation sites follow: asparagine 58, asparagine 66, asparagine 73, asparagine 106, asparagine 152, and asparagine 167. The Ig-like 2 domain occupies 114–181 (LQTSADMVLV…YHCKGYLRQV (68 aa)). A disulfide bond links cysteine 131 and cysteine 174. A helical transmembrane segment spans residues 205–223 (LIFPLLVAILFAVDTGLLL). The Cytoplasmic segment spans residues 224-250 (STEEQFKSVLEIQKTGKYKKVETELLT).

Tetramer of an alpha chain, a beta chain, and two disulfide linked gamma chains. Interacts with IGHE (via CH3 region). Expressed in bone marrow mast cells, as well as in the pineal gland at night.

Its subcellular location is the cell membrane. Its function is as follows. High-affinity receptor for immunoglobulin epsilon/IgE. Mediates IgE effector functions in myeloid cells. Upon IgE binding and antigen/allergen cross-linking initiates signaling pathways that lead to myeloid cell activation and differentiation. On mast cells, basophils and eosinophils stimulates the secretion of vasoactive amines, lipid mediators and cytokines that contribute to inflammatory response, tissue remodeling and cytotoxicity against microbes. Triggers the immediate hypersensitivity response to allergens as a host defense mechanism against helminth parasites, pathogenic bacteria and venom toxicity. When dysregulated, it can elicit harmful life-threatening allergic and anaphylactic reactions. The sequence is that of High affinity immunoglobulin epsilon receptor subunit alpha (Fcer1a) from Mus musculus (Mouse).